The following is a 407-amino-acid chain: TOM1-like protein 1 (407 aa).

G2 is modified (N-acetylglycine). A VHS domain is found at 55–183; the sequence is ATTENLEEPD…SLKARGIRFP (129 aa). Residues 228–315 enclose the GAT domain; it reads FTAEQTKEAF…TLSKYEEMNK (88 aa). Residues 315–407 form a disordered region; it reads KPSAPLTSHE…SSKNDDLIRF (93 aa). Phosphoserine is present on S337. Residues 337–347 are compositionally biased toward basic and acidic residues; sequence SPIHGREESLV. Residues 353 to 364 show a composition bias toward gly residues; the sequence is VRGGFHGGGGSG. Over residues 388 to 407 the composition is skewed to basic and acidic residues; the sequence is PDHDPKKEQSSSKNDDLIRF.

This sequence belongs to the TOM1 family. In terms of tissue distribution, ubiquitously expressed.

The protein resides in the membrane. Might contribute to the loading of the ESCRT machinery. This chain is TOM1-like protein 1, found in Arabidopsis thaliana (Mouse-ear cress).